Consider the following 517-residue polypeptide: Protein translocase subunit SecD (517 aa).

6 helical membrane-spanning segments follow: residues 5–25 (LRWI…FPLD), 357–377 (IWAG…YYKF), 380–400 (FIAS…MGMF), 407–427 (PGIA…VLIF), 455–475 (IIDS…FGTG), and 479–499 (GFAV…VTLS).

It belongs to the SecD/SecF family. SecD subfamily. In terms of assembly, forms a complex with SecF. Part of the essential Sec protein translocation apparatus which comprises SecA, SecYEG and auxiliary proteins SecDF. Other proteins may also be involved.

The protein resides in the cell inner membrane. Part of the Sec protein translocase complex. Interacts with the SecYEG preprotein conducting channel. SecDF uses the proton motive force (PMF) to complete protein translocation after the ATP-dependent function of SecA. The polypeptide is Protein translocase subunit SecD (Calditerrivibrio nitroreducens (strain DSM 19672 / NBRC 101217 / Yu37-1)).